The sequence spans 319 residues: ATP-dependent 6-phosphofructokinase (319 aa).

ATP-binding positions include Gly11, 72–73 (RS), and 102–105 (GDGS). Residue Asp103 coordinates Mg(2+). Residue 126-128 (TID) participates in substrate binding. Catalysis depends on Asp128, which acts as the Proton acceptor. Arg155 lines the ADP pocket. Substrate-binding positions include Arg163 and 170-172 (MGR). Residue 186 to 188 (GAE) participates in ADP binding. Substrate is bound by residues Glu223, Arg245, and 251–254 (HTQR).

This sequence belongs to the phosphofructokinase type A (PFKA) family. ATP-dependent PFK group I subfamily. Prokaryotic clade 'B1' sub-subfamily. Homotetramer. The cofactor is Mg(2+).

Its subcellular location is the cytoplasm. The enzyme catalyses beta-D-fructose 6-phosphate + ATP = beta-D-fructose 1,6-bisphosphate + ADP + H(+). It participates in carbohydrate degradation; glycolysis; D-glyceraldehyde 3-phosphate and glycerone phosphate from D-glucose: step 3/4. With respect to regulation, allosterically activated by ADP and other diphosphonucleosides, and allosterically inhibited by phosphoenolpyruvate. Its function is as follows. Catalyzes the phosphorylation of D-fructose 6-phosphate to fructose 1,6-bisphosphate by ATP, the first committing step of glycolysis. This is ATP-dependent 6-phosphofructokinase from Sulfurimonas denitrificans (strain ATCC 33889 / DSM 1251) (Thiomicrospira denitrificans (strain ATCC 33889 / DSM 1251)).